The primary structure comprises 346 residues: Large ribosomal subunit protein uL3 (346 aa).

The disordered stretch occupies residues 324-346 (KPPKKKPPVERPQITYVSRESKQ).

It belongs to the universal ribosomal protein uL3 family. Part of the 50S ribosomal subunit. Forms a cluster with proteins L14 and L24e.

Functionally, one of the primary rRNA binding proteins, it binds directly near the 3'-end of the 23S rRNA, where it nucleates assembly of the 50S subunit. The sequence is that of Large ribosomal subunit protein uL3 from Thermococcus gammatolerans (strain DSM 15229 / JCM 11827 / EJ3).